Consider the following 408-residue polypeptide: S-adenosylmethionine synthase (408 aa).

142–147 is a binding site for ATP; that stretch reads GEGSGD.

The protein belongs to the AdoMet synthase 2 family. Mg(2+) serves as cofactor.

It carries out the reaction L-methionine + ATP + H2O = S-adenosyl-L-methionine + phosphate + diphosphate. It functions in the pathway amino-acid biosynthesis; S-adenosyl-L-methionine biosynthesis; S-adenosyl-L-methionine from L-methionine: step 1/1. Functionally, catalyzes the formation of S-adenosylmethionine from methionine and ATP. The polypeptide is S-adenosylmethionine synthase (Halobacterium salinarum (strain ATCC 29341 / DSM 671 / R1)).